The chain runs to 126 residues: Small ribosomal subunit protein uS13 (126 aa).

A disordered region spans residues 92-126; the sequence is HRRGLPVRGQRTKTNARTRKGPKKTVAGKKKATRK.

This sequence belongs to the universal ribosomal protein uS13 family. Part of the 30S ribosomal subunit. Forms a loose heterodimer with protein S19. Forms two bridges to the 50S subunit in the 70S ribosome.

Functionally, located at the top of the head of the 30S subunit, it contacts several helices of the 16S rRNA. In the 70S ribosome it contacts the 23S rRNA (bridge B1a) and protein L5 of the 50S subunit (bridge B1b), connecting the 2 subunits; these bridges are implicated in subunit movement. Contacts the tRNAs in the A and P-sites. In Deinococcus radiodurans (strain ATCC 13939 / DSM 20539 / JCM 16871 / CCUG 27074 / LMG 4051 / NBRC 15346 / NCIMB 9279 / VKM B-1422 / R1), this protein is Small ribosomal subunit protein uS13.